The sequence spans 216 residues: Transmembrane emp24 domain-containing protein eca (216 aa).

The first 20 residues, 1 to 20 (MRNQFICVALLLCALNSACG), serve as a signal peptide directing secretion. The Lumenal portion of the chain corresponds to 21–183 (LYFHISETER…RHTSESTNSR (163 aa)). One can recognise a GOLD domain in the interval 30–126 (RKCFIEEVPD…QLRVHLDIQV (97 aa)). The stretch at 134 to 164 (ANVAQKEKLTELQLRIRQLLDQVDQITKEQN) forms a coiled coil. Residues 184-203 (VLWWSLAQTVVLVCMGFWQM) traverse the membrane as a helical segment. Residues 204–216 (RHLKSFFEAKKLV) are Cytoplasmic-facing. The Prevents secretion from ER motif lies at 213–216 (KKLV).

This sequence belongs to the EMP24/GP25L family.

It localises to the endoplasmic reticulum membrane. Eca and bai are essential, though not redundant, for dorsoventral patterning of the embryo. Specifically required during early embryogenesis for the activity of maternal tkv, while the zygotic tkv is not affected. Involved in Golgi organization. The protein is Transmembrane emp24 domain-containing protein eca of Drosophila willistoni (Fruit fly).